Reading from the N-terminus, the 463-residue chain is Glycine--tRNA ligase (463 aa).

Positions 100 and 175 each coordinate substrate. ATP contacts are provided by residues 207–209 (RNE), 217–222 (FRTREF), 291–292 (EL), and 335–338 (GADR). 222–226 (FEQME) contacts substrate. 331–335 (EPSLG) lines the substrate pocket.

Belongs to the class-II aminoacyl-tRNA synthetase family. In terms of assembly, homodimer.

The protein localises to the cytoplasm. It catalyses the reaction tRNA(Gly) + glycine + ATP = glycyl-tRNA(Gly) + AMP + diphosphate. Its function is as follows. Catalyzes the attachment of glycine to tRNA(Gly). This Clostridium beijerinckii (strain ATCC 51743 / NCIMB 8052) (Clostridium acetobutylicum) protein is Glycine--tRNA ligase.